Here is a 331-residue protein sequence, read N- to C-terminus: RNA/RNP complex-1-interacting phosphatase (331 aa).

The 148-residue stretch at 61–208 (FEKHLAPEEC…LRNGPIRKNW (148 aa)) folds into the Tyrosine-protein phosphatase domain. Cys152 (phosphocysteine intermediate) is an active-site residue. Substrate is bound at residue 153–158 (THGVNR). Arg158 serves as the catalytic Proton donor/acceptor.

The protein belongs to the protein-tyrosine phosphatase family. Non-receptor class dual specificity subfamily. As to quaternary structure, monomer. May interact with SFRS7 and SFRS9/SRP30C.

It localises to the nucleus. Its subcellular location is the nucleus speckle. Possesses RNA 5'-triphosphatase and diphosphatase activities, but displays a poor protein-tyrosine phosphatase activity. In addition, has phosphatase activity with ATP, ADP and O-methylfluorescein phosphate (in vitro). Binds to RNA. May participate in nuclear mRNA metabolism. The polypeptide is RNA/RNP complex-1-interacting phosphatase (DUSP11) (Bos taurus (Bovine)).